The following is a 670-amino-acid chain: Penicillin-binding protein activator LpoA (670 aa).

The N-terminal stretch at 1–26 (MLPSKVVHRKAVRTVPLLLAALIFAG) is a signal peptide. C27 is lipidated: N-palmitoyl cysteine. A lipid anchor (S-diacylglycerol cysteine) is attached at C27.

The protein belongs to the LpoA family. As to quaternary structure, interacts with PBP1a.

It is found in the cell outer membrane. Its function is as follows. Regulator of peptidoglycan synthesis that is essential for the function of penicillin-binding protein 1A (PBP1a). The sequence is that of Penicillin-binding protein activator LpoA from Erwinia tasmaniensis (strain DSM 17950 / CFBP 7177 / CIP 109463 / NCPPB 4357 / Et1/99).